A 312-amino-acid chain; its full sequence is HPr kinase/phosphorylase (312 aa).

Residues histidine 139 and lysine 160 contribute to the active site. An ATP-binding site is contributed by 154 to 161 (GSSGVGKS). Serine 161 provides a ligand contact to Mg(2+). Catalysis depends on aspartate 178, which acts as the Proton acceptor; for phosphorylation activity. Proton donor; for dephosphorylation activity. Residues 202-211 (LEIRGLGIIN) form an important for the catalytic mechanism of both phosphorylation and dephosphorylation region. Glutamate 203 lines the Mg(2+) pocket. Arginine 244 is a catalytic residue. The tract at residues 265–270 (PVRPGR) is important for the catalytic mechanism of dephosphorylation.

Belongs to the HPrK/P family. Homohexamer. Mg(2+) is required as a cofactor.

The catalysed reaction is [HPr protein]-L-serine + ATP = [HPr protein]-O-phospho-L-serine + ADP + H(+). It carries out the reaction [HPr protein]-O-phospho-L-serine + phosphate + H(+) = [HPr protein]-L-serine + diphosphate. In terms of biological role, catalyzes the ATP- as well as the pyrophosphate-dependent phosphorylation of a specific serine residue in HPr, a phosphocarrier protein of the phosphoenolpyruvate-dependent sugar phosphotransferase system (PTS). HprK/P also catalyzes the pyrophosphate-producing, inorganic phosphate-dependent dephosphorylation (phosphorolysis) of seryl-phosphorylated HPr (P-Ser-HPr). The two antagonistic activities of HprK/P are regulated by several intracellular metabolites, which change their concentration in response to the absence or presence of rapidly metabolisable carbon sources (glucose, fructose, etc.) in the growth medium. Therefore, by controlling the phosphorylation state of HPr, HPrK/P is a sensor enzyme that plays a major role in the regulation of carbon metabolism and sugar transport: it mediates carbon catabolite repression (CCR), and regulates PTS-catalyzed carbohydrate uptake and inducer exclusion. The chain is HPr kinase/phosphorylase from Listeria innocua serovar 6a (strain ATCC BAA-680 / CLIP 11262).